Reading from the N-terminus, the 323-residue chain is MKPENKIPVLTRLSDEMTAVVNFQQPGLPPWPADGDIETQRQYYLLERRFWNADAPSMTTRTCVVPTPYGDVTTRLYSPQPTSQATLYYLHGGGFILGNLDTHDRIMRLLARYTGCTVIGIDYSLSPQARYPQAIEETVAVCSYFSQHADEYSLNVEKIGFAGDSAGAMLALASALWLRDKHIRCGNVIAILLWYGLYGLQDSVSRRLFGGAWDGLTREDLDMYEKAYLRNEDDRESPWYCLFNNDLTRDVPPCFIASAEFDPLIDDSRLLHQTLQAHQQPCEYKMYPGTLHAFLHYSRMMTIADDALQDGARFFMARMKTPR.

Residues 91-93 (HGG) carry the Involved in the stabilization of the negatively charged intermediate by the formation of the oxyanion hole motif. Catalysis depends on residues Ser-165, Asp-262, and His-292.

It belongs to the 'GDXG' lipolytic enzyme family. In terms of assembly, homodimer. Interacts with MalT and MelA.

Its subcellular location is the cytoplasm. In terms of biological role, displays esterase activity towards short chain fatty esters (acyl chain length of up to 8 carbons). Able to hydrolyze triacetylglycerol (triacetin) and tributyrylglycerol (tributyrin), but not trioleylglycerol (triolein) or cholesterol oleate. Negatively regulates MalT activity by antagonizing maltotriose binding. Inhibits MelA galactosidase activity. This chain is Acetyl esterase, found in Salmonella paratyphi B (strain ATCC BAA-1250 / SPB7).